The sequence spans 267 residues: Phosphoinositide-3-kinase-interacting protein 1 (267 aa).

The first 21 residues, 1–21, serve as a signal peptide directing secretion; it reads MLLAWVHTFLLSNMLLAEAYG. The Extracellular portion of the chain corresponds to 22–172; it reads SGGCFWDNGH…NSKEKKDLGT (151 aa). The Kringle domain maps to 24 to 101; that stretch reads GCFWDNGHLY…EKRPCEDLRC (78 aa). Disulfide bonds link Cys25-Cys101, Cys46-Cys82, and Cys70-Cys96. Basic and acidic residues predominate over residues 91 to 101; sequence PEKRPCEDLRC. The interval 91-122 is disordered; it reads PEKRPCEDLRCPETTSQAPPPPPPSSTTELEE. Residues 173 to 193 form a helical membrane-spanning segment; the sequence is LGYVLGVTMTVIIIAIGVGIV. Residues 194–267 are Cytoplasmic-facing; that stretch reads LGYTYKRGKD…LTDQAGTPGA (74 aa).

It localises to the cell membrane. Functionally, negative regulator of hepatic phosphatidylinositol 3-kinase (PI3K) activity. The polypeptide is Phosphoinositide-3-kinase-interacting protein 1 (Pik3ip1) (Rattus norvegicus (Rat)).